The following is a 62-amino-acid chain: RRCFNQQSSQPQTNKSCPPGENSCYRKQWRDHRGTIIERGCGCPTVKPGVKLRCCQSEDCNN.

Over residues 1 to 16 (RRCFNQQSSQPQTNKS) the composition is skewed to polar residues. The interval 1–22 (RRCFNQQSSQPQTNKSCPPGEN) is disordered. 4 disulfide bridges follow: cysteine 3-cysteine 24, cysteine 17-cysteine 41, cysteine 43-cysteine 54, and cysteine 55-cysteine 60.

It belongs to the three-finger toxin family. Short-chain subfamily. Type I alpha-neurotoxin sub-subfamily. In terms of tissue distribution, expressed by the venom gland.

It localises to the secreted. Binds to muscle nicotinic acetylcholine receptor (nAChR) and inhibit acetylcholine from binding to the receptor, thereby impairing neuromuscular transmission. The chain is Short neurotoxin C from Laticauda laticaudata (Blue-ringed sea krait).